The following is a 717-amino-acid chain: Polyribonucleotide nucleotidyltransferase (717 aa).

D487 and D493 together coordinate Mg(2+). The KH domain maps to 554–613; sequence PKIITMAINPDKIRDVIGPSGKQINKIIEETGVKIDIEQDGTVFISSINQEMNEKAKKII. Residues 623-691 enclose the S1 motif domain; the sequence is GEIYLGKVKR…KQGRVNLSRK (69 aa).

The protein belongs to the polyribonucleotide nucleotidyltransferase family. It depends on Mg(2+) as a cofactor.

The protein resides in the cytoplasm. The enzyme catalyses RNA(n+1) + phosphate = RNA(n) + a ribonucleoside 5'-diphosphate. Involved in mRNA degradation. Catalyzes the phosphorolysis of single-stranded polyribonucleotides processively in the 3'- to 5'-direction. The protein is Polyribonucleotide nucleotidyltransferase of Bacillus mycoides (strain KBAB4) (Bacillus weihenstephanensis).